The chain runs to 261 residues: CD40 ligand (261 aa).

Topologically, residues 1-22 (MIETYNQTSPRSAATGLPISMK) are cytoplasmic. Residues 23–46 (IFMYLLTVFLITQMIGSALFAVYL) traverse the membrane as a helical; Signal-anchor for type II membrane protein segment. Residues 47–261 (HRRLDKIEDE…GFTSFGLLKL (215 aa)) are Extracellular-facing. The 140-residue stretch at 122–261 (IAAHVISEAS…GFTSFGLLKL (140 aa)) folds into the THD domain. Cys178 and Cys218 form a disulfide bridge. A glycan (N-linked (GlcNAc...) (complex) asparagine; alternate) is linked at Asn240. A glycan (N-linked (GlcNAc...) (high mannose) asparagine; alternate) is linked at Asn240.

The protein belongs to the tumor necrosis factor family. In terms of assembly, homotrimer. Interacts with isoform 3 of CD28. CD40 ligand, soluble form: Exists as either a monomer or a homotrimer. Forms a ternary complex between CD40 and integrins for CD40-CD40LG signaling. The soluble form derives from the membrane form by proteolytic processing. Post-translationally, N-linked glycan is a mixture of high mannose and complex type. Glycan structure does not influence binding affinity to CD40. In terms of processing, not O-glycosylated. Specifically expressed on activated CD4+ T-lymphocytes.

The protein resides in the cell membrane. It localises to the cell surface. It is found in the secreted. Cytokine that acts as a ligand to CD40/TNFRSF5. Costimulates T-cell proliferation and cytokine production. Its cross-linking on T-cells generates a costimulatory signal which enhances the production of IL4 and IL10 in conjunction with the TCR/CD3 ligation and CD28 costimulation. Induces the activation of NF-kappa-B. Induces the activation of kinases MAPK8 and PAK2 in T-cells. Induces tyrosine phosphorylation of isoform 3 of CD28. Mediates B-cell proliferation in the absence of co-stimulus as well as IgE production in the presence of IL4. Involved in immunoglobulin class switching. Its function is as follows. Acts as a ligand for integrins, specifically ITGA5:ITGB1 and ITGAV:ITGB3; both integrins and the CD40 receptor are required for activation of CD40-CD40LG signaling, which have cell-type dependent effects, such as B-cell activation, NF-kappa-B signaling and anti-apoptotic signaling. This chain is CD40 ligand (CD40LG), found in Homo sapiens (Human).